The following is a 512-amino-acid chain: Maturase K (512 aa).

Belongs to the intron maturase 2 family. MatK subfamily.

It is found in the plastid. The protein localises to the chloroplast. Functionally, usually encoded in the trnK tRNA gene intron. Probably assists in splicing its own and other chloroplast group II introns. This Alisma canaliculatum (Water plantain) protein is Maturase K.